We begin with the raw amino-acid sequence, 986 residues long: MATYMSTICFGSFECKLPYSPASCEHIVKEREVPASVDPFADLETQLSARLLKQKYATVRVLKNGTFTYRYKTDAQIMRIQKKLERKDREEYHFQMAAPSIVSKITIAGGDPPSKSEPQAPRGIIHTTPRMRKVKTRPIIKLTEGQMNHLIKQIKQIMSEKRGSVHLISKKTTHVQYKKILGAYSAAVRTAHMMGLRRRVDFRCDMWTVGLLQRLARTDKWSNQVRTINIRRGDSGVILNTKSLKGHFGRSSGGLFIVRGSHEGKLYDARSRVTQSILNSMIQFSNADNFWKGLDGNWARMRYPSDHTCVAGLPVEDCGRVAALMAHSILPCYKITCPTCAQQYASLPVSDLFKLLHKHARDGLNRLGADKDRFIHVNKFLIALEHLTEPVDLNLELFNEIFKSIGEKQQAPFKNLNVLNNFFLKGKENTAHEWQVAQLSLLELARFQKNRTDNIKKGDISFFRNKLSAKANWNLYLSCDNQLDKNANFLWGQREYHAKRFFSNFFEEIDPAKGYSAYEIRKHPSGTRKLSIGNLVVPLDLAEFRQKMKGDYRKQPGVSKKCTSSKDGNYVYPCCCTTLDDGSAIESTFYPPTKKHLVIGNSGDQKFVDLPKGDSEMLYIAKQGYCYINVFLAMLINISEEDAKDFTKKVRDMCVPKLGTWPTMMDLATTCAQMRIFYPDVHDAELPRILVDHDTQTCHVVDSFGSQTTGYHILKASSVSQLILFANDELESDIKHYRVGGVPNASPELGSTISPFREGGVIMSESAALKLLLKGIFRPKVMRQLLLDEPYLLILSILSPGILMAMYNNGIFELAVRLWINEKQSIAMIASLLSALALRVSAAETLVAQRIIIDAAATDLLDATCDGFNLHLTYPTALMVLQVVKNRNECDDTLFKAGFPSYNTSVVQIMEKKLSKSLERCLERFNLARKLSATWYSYRAKRSIHSVHKTHRKGRFERVIQHITTSVLGPKRPGGQRHCLRIERAI.

The 144-residue stretch at 141 to 284 (KLTEGQMNHL…QSILNSMIQF (144 aa)) folds into the Peptidase S30 domain. Residues H192, D201, and S235 each act as for P1 proteinase activity in the active site. The Involved in interaction with stylet and aphid transmission signature appears at 334 to 337 (KITC). The Involved in virions binding and aphid transmission motif lies at 592–594 (PTK). In terms of domain architecture, Peptidase C6 spans 618–740 (LYIAKQGYCY…ESDIKHYRVG (123 aa)). Active-site for helper component proteinase activity residues include C626 and H699.

The protein belongs to the potyviridae P3N-PIPO polyprotein family. As to quaternary structure, interacts (via PIPO domain) with host PCaP1 protein; this interaction may help to anchor the movement complex to the plasma membrane from which the complex could move to the plasmodesmata. Potyviral RNA is expressed as two polyproteins which undergo post-translational proteolytic processing. Genome polyprotein is processed by NIa-pro, P1 and HC-pro proteinases resulting in the production of at least ten individual proteins. P3N-PIPO is cleaved by P1 and HC-pro proteinases resulting in the production of three individual proteins. The P1 proteinase and the HC-pro cleave only their respective C-termini autocatalytically.

The protein resides in the host cell junction. It localises to the host plasmodesma. The enzyme catalyses Hydrolyzes a Gly-|-Gly bond at its own C-terminus, commonly in the sequence -Tyr-Xaa-Val-Gly-|-Gly, in the processing of the potyviral polyprotein.. Required for aphid transmission and also has proteolytic activity. Only cleaves a Gly-Gly dipeptide at its own C-terminus. Interacts with virions and aphid stylets. Acts as a suppressor of RNA-mediated gene silencing, also known as post-transcriptional gene silencing (PTGS), a mechanism of plant viral defense that limits the accumulation of viral RNAs. May have RNA-binding activity. Functionally, allows efficient cell to cell propagation, by bypassing the host cell wall barrier. Transports viral genome to neighboring plant cells directly through plasmosdesmata, without any budding. This Potato virus Y (strain N) (PVY) protein is P3N-PIPO polyprotein.